We begin with the raw amino-acid sequence, 134 residues long: Lymphocyte antigen 6G (134 aa).

Residues 1–26 form the signal peptide; it reads MDTCHIAKSCVLILLVVLLCAERAQG. Residues 27 to 118 enclose the UPAR/Ly6 domain; that stretch reads LECYNCIGVP…PTGGSSWTMA (92 aa). 5 cysteine pairs are disulfide-bonded: cysteine 29–cysteine 53, cysteine 32–cysteine 41, cysteine 46–cysteine 74, cysteine 78–cysteine 98, and cysteine 99–cysteine 104. Asparagine 105 carries GPI-anchor amidated asparagine lipidation. The propeptide at 106–134 is removed in mature form; sequence AAVPTGGSSWTMAGVLLFSLVSVLLQTFL.

In terms of tissue distribution, expressed in bone marrow.

Its subcellular location is the cell membrane. The sequence is that of Lymphocyte antigen 6G (Ly6g) from Mus musculus (Mouse).